Reading from the N-terminus, the 107-residue chain is Insulin-like peptide 6 (107 aa).

A signal peptide spans 1–33; it reads MVLKVPTSKVLLVLATLFAVAAMISSWMPQVAA. Cystine bridges form between cysteine 48/cysteine 91, cysteine 60/cysteine 105, and cysteine 90/cysteine 96. Positions 67 to 76 are cleaved as a propeptide — connecting peptide; that stretch reads LGDVFPNSFG.

This sequence belongs to the insulin family. As to quaternary structure, heterodimer of a B chain and an A chain linked by two disulfide bonds. As to expression, expressed at a low level in the larval gut.

Its subcellular location is the secreted. In terms of biological role, possible ligand of InR/insulin-like receptor. This Drosophila melanogaster (Fruit fly) protein is Insulin-like peptide 6.